A 152-amino-acid chain; its full sequence is Transcriptional repressor NrdR (152 aa).

The segment at 3-34 (CPKCGSLNDKVVDTRQSKDGTVIRRRRECLDC) is a zinc-finger region. The ATP-cone domain maps to 49–139 (IVVKKKNGTT…VYNEFQDIKD (91 aa)).

Belongs to the NrdR family. The cofactor is Zn(2+).

Its function is as follows. Negatively regulates transcription of bacterial ribonucleotide reductase nrd genes and operons by binding to NrdR-boxes. This Persephonella marina (strain DSM 14350 / EX-H1) protein is Transcriptional repressor NrdR.